The sequence spans 151 residues: Deoxyuridine 5'-triphosphate nucleotidohydrolase (151 aa).

Residues Arg-70 to Gly-72, Asn-83, Leu-87 to Asp-89, and Met-97 contribute to the substrate site.

Belongs to the dUTPase family. Requires Mg(2+) as cofactor.

The catalysed reaction is dUTP + H2O = dUMP + diphosphate + H(+). The protein operates within pyrimidine metabolism; dUMP biosynthesis; dUMP from dCTP (dUTP route): step 2/2. Its function is as follows. This enzyme is involved in nucleotide metabolism: it produces dUMP, the immediate precursor of thymidine nucleotides and it decreases the intracellular concentration of dUTP so that uracil cannot be incorporated into DNA. This chain is Deoxyuridine 5'-triphosphate nucleotidohydrolase, found in Mannheimia succiniciproducens (strain KCTC 0769BP / MBEL55E).